The sequence spans 361 residues: Molybdopterin synthase catalytic subunit (361 aa).

Substrate is bound by residues 101–102, Lys-117, and 124–126; these read HR and KKE.

Belongs to the MoaE family. MOCS2B subfamily. As to quaternary structure, heterotetramer; composed of 2 small (Mocs2A) and 2 large (Mocs2B) subunits.

It localises to the cytoplasm. The enzyme catalyses 2 [molybdopterin-synthase sulfur-carrier protein]-C-terminal-Gly-aminoethanethioate + cyclic pyranopterin phosphate + H2O = molybdopterin + 2 [molybdopterin-synthase sulfur-carrier protein]-C-terminal Gly-Gly + 2 H(+). Its pathway is cofactor biosynthesis; molybdopterin biosynthesis. Its function is as follows. Catalytic subunit of the molybdopterin synthase complex, a complex that catalyzes the conversion of precursor Z into molybdopterin. Acts by mediating the incorporation of 2 sulfur atoms from thiocarboxylated Mocs2A into precursor Z to generate a dithiolene group. The protein is Molybdopterin synthase catalytic subunit of Drosophila persimilis (Fruit fly).